Reading from the N-terminus, the 260-residue chain is Phosphate import ATP-binding protein PstB (260 aa).

The ABC transporter domain occupies 14–255; the sequence is VQVKNLAFYY…PRNKQTEDYI (242 aa). 46–53 contributes to the ATP binding site; it reads GPSGCGKS.

Belongs to the ABC transporter superfamily. Phosphate importer (TC 3.A.1.7) family. As to quaternary structure, the complex is composed of two ATP-binding proteins (PstB), two transmembrane proteins (PstC and PstA) and a solute-binding protein (PstS).

Its subcellular location is the cell inner membrane. It carries out the reaction phosphate(out) + ATP + H2O = ADP + 2 phosphate(in) + H(+). Its function is as follows. Part of the ABC transporter complex PstSACB involved in phosphate import. Responsible for energy coupling to the transport system. The protein is Phosphate import ATP-binding protein PstB of Syntrophotalea carbinolica (strain DSM 2380 / NBRC 103641 / GraBd1) (Pelobacter carbinolicus).